Consider the following 560-residue polypeptide: MVLLKEPVQPLPRSSLLYNNASNSSSRIKETRKVKLLYNPLTKRQILNNFEILATLGNGQYGKVKLARDLGTGALVAIKILNRFEKRSGYSLQLKVENPRVNQEIEVMKRCHHENVVELYEILNDPESTKVYLVLEYCSRGPVKWCPENKMEIKAVGPSILTFQQSRKVVLDVVSGLEYLHSQGITHRDIKPSNLLISSNGTVKISDFGVAMSTATGSTNIQSSHEQLLKSRALGTPAFFAPELCSTEKEYSCSSAIDIWSLGVTIYCLLFGKLPFNANSGLELFDSIINKPLEFPSYEEMLNGATSGITMEEYTDAKDLLKKLLQKDPDKRIKLADIKVHPFMCHYGKSDAASVSTNLETFHELKVSPPSSCKRVELVSLPVNSSFASLDSVYMENFDHNNLRTGADRNSTYSPSIYDANTLSPSAYHNIGSRESSYSSFSSFTSSTAFASQISIQDAPAIGDQQCLIGESGSSLRVNSCEFPQYTTMSPVGEYPFESTEASLSSTLTPVGNVPQRIKAHLVEGKSNSKDDLRIEADASLVFEASDAQRTRRRMSLYKL.

Positions 50 to 344 constitute a Protein kinase domain; it reads FEILATLGNG…LADIKVHPFM (295 aa). Residues 56–64 and lysine 79 contribute to the ATP site; that span reads LGNGQYGKV. The Proton acceptor role is filled by aspartate 189.

It belongs to the protein kinase superfamily. Ser/Thr protein kinase family. Autophosphorylated.

It catalyses the reaction L-seryl-[protein] + ATP = O-phospho-L-seryl-[protein] + ADP + H(+). It carries out the reaction L-threonyl-[protein] + ATP = O-phospho-L-threonyl-[protein] + ADP + H(+). Functionally, one of the three SNF1 protein kinases (with SAK1 and ELM1) which are required for growth on nonfermentable carbon sources and nonpreferred sugars and for response to environmental stress. Activates SNF1 by phosphorylation of its activation-loop 'Thr-210'. Required for the regulation by SNF1 of the transcription of a large set of genes, the modification the activity of metabolic enzymes, and the control of various nutrient-responsive cellular developmental processes. Also phosphorylates GAL83, MIG1 and SIP2. The sequence is that of Serine/threonine-protein kinase TOS3 (TOS3) from Saccharomyces cerevisiae (strain YJM789) (Baker's yeast).